The primary structure comprises 156 residues: Snaclec A14 (156 aa).

The N-terminal stretch at 1 to 23 (MGRFIFVRVGLLVVFLSLSGTGA) is a signal peptide. 3 cysteine pairs are disulfide-bonded: C27–C38, C55–C152, and C127–C144. Positions 34-153 (YDQHCYKAFD…CGDDYPFVCK (120 aa)) constitute a C-type lectin domain. Residue N141 is glycosylated (N-linked (GlcNAc...) asparagine).

It belongs to the snaclec family. In terms of assembly, heterodimer; disulfide-linked. As to expression, expressed by the venom gland.

It is found in the secreted. Its function is as follows. Interferes with one step of hemostasis (modulation of platelet aggregation, or coagulation cascade, for example). This chain is Snaclec A14, found in Macrovipera lebetinus (Levantine viper).